We begin with the raw amino-acid sequence, 182 residues long: MSGRTVPHAHPATAEYEFANPSRLGEQRFGEGLLPEEILTPTLYHGYYVRPRAARAGEGGRAGASELRLSEGKFQAFLDVSHFTPDEVTVRTVDNLLEVSARHPQRLDRHGFVSREFCRTYVLPADVDPWRVRAALSHDGILNLEAPRGGRHLDTEVNEVYISLLPAPPDPEEEEEVARVEP.

Residues 55-163 enclose the sHSP domain; the sequence is RAGEGGRAGA…DTEVNEVYIS (109 aa).

It belongs to the small heat shock protein (HSP20) family. As to quaternary structure, interacts with DMPK; may enhance its kinase activity.

It is found in the cytoplasm. The protein resides in the nucleus. Functionally, may regulate the kinase DMPK. The polypeptide is Heat shock protein beta-2 (Hspb2) (Rattus norvegicus (Rat)).